The chain runs to 281 residues: NADPH-dependent 7-cyano-7-deazaguanine reductase (281 aa).

87–89 (IES) is a substrate binding site. Position 89-90 (89-90 (SK)) interacts with NADPH. C188 acts as the Thioimide intermediate in catalysis. Catalysis depends on D195, which acts as the Proton donor. 227–228 (HE) provides a ligand contact to substrate. 256 to 257 (RG) contacts NADPH. The tract at residues 261–281 (INPYRSTEQAKPDHNHRMARQ) is disordered. Residues 268 to 281 (EQAKPDHNHRMARQ) show a composition bias toward basic and acidic residues.

It belongs to the GTP cyclohydrolase I family. QueF type 2 subfamily. As to quaternary structure, homodimer.

The protein localises to the cytoplasm. It catalyses the reaction 7-aminomethyl-7-carbaguanine + 2 NADP(+) = 7-cyano-7-deazaguanine + 2 NADPH + 3 H(+). It functions in the pathway tRNA modification; tRNA-queuosine biosynthesis. In terms of biological role, catalyzes the NADPH-dependent reduction of 7-cyano-7-deazaguanine (preQ0) to 7-aminomethyl-7-deazaguanine (preQ1). The sequence is that of NADPH-dependent 7-cyano-7-deazaguanine reductase from Vibrio vulnificus (strain CMCP6).